A 280-amino-acid polypeptide reads, in one-letter code: PsbP domain-containing protein 7, chloroplastic (280 aa).

The N-terminal 36 residues, 1–36, are a transit peptide targeting the chloroplast; it reads MSLKPYFSLLYSSPTNVKLSNFLIAQQPSGDLKTTP.

Belongs to the PsbP family.

It is found in the plastid. The protein localises to the chloroplast. The protein is PsbP domain-containing protein 7, chloroplastic (PPD7) of Arabidopsis thaliana (Mouse-ear cress).